We begin with the raw amino-acid sequence, 189 residues long: Photosystem I assembly protein Ycf4 (189 aa).

Transmembrane regions (helical) follow at residues 25-45 and 62-82; these read SVYF…LAGL and LVFI…SLAG.

Belongs to the Ycf4 family.

The protein localises to the cellular thylakoid membrane. Seems to be required for the assembly of the photosystem I complex. The polypeptide is Photosystem I assembly protein Ycf4 (Synechococcus sp. (strain JA-3-3Ab) (Cyanobacteria bacterium Yellowstone A-Prime)).